Reading from the N-terminus, the 381-residue chain is MTNNESKGPFEGLLVIDMTHVLNGPFGTQLLCNMGARVIKVEPPGHGDDTRTFGPYVDGQSLYYSFINHGKESVVLDLKNDHDKSIFINMLKQADVLAENFRPGTMEKLGFSWETLQEINPRLIYASSSGFGHTGPLKDAPAYDTIIQAMSGIMMETGYPDAPPVRVGTSLADLCGGVYLFSGIVSALYGREKSQRGAHVDIAMFDATLSFLEHGLMAYIATGKSPQRLGNRHPYMAPFDVFNTQDKPITICCGNDKLFSALCQALELTELVNDPRFSSNILRVQNQAILKQYIERTLKTQAAEVWLARIHEVGVPVAPLLSVAEAIKLPQTQARNMLIEAGGIMMPGNPIKISGCADPHVMPGAATLDQHGEQIRQEFSS.

The active site involves H233.

Belongs to the CoA-transferase III family. In terms of assembly, homodimer.

The enzyme catalyses oxalate + acetyl-CoA = oxalyl-CoA + acetate. Involved in the catabolism of oxalate and in the adapatation to low pH. ACOCT serves to prime the oxalate-induced acid tolerance response (ATR) cycle by producing substrate for oxalyl-CoA decarboxylase (OXC) and formyl-coenzyme A transferase (FCOCT). Catalyzes the reversible conversion of acetyl-CoA and oxalate to oxalyl-CoA and acetate. It can also use formyl-CoA and oxalate to produce oxalyl-CoA and formate with significantly reduced specific activity. This is Acetyl-CoA:oxalate CoA-transferase (yfdE) from Escherichia coli (strain K12).